Reading from the N-terminus, the 222-residue chain is Chalcone--flavanone isomerase 1 (222 aa).

Substrate is bound by residues Thr48, Asn113, and Thr190.

It belongs to the chalcone isomerase family.

The enzyme catalyses a chalcone = a flavanone.. It functions in the pathway secondary metabolite biosynthesis; flavonoid biosynthesis. Catalyzes the intramolecular cyclization of bicyclic chalcones into tricyclic (S)-flavanones. Responsible for the isomerization of 4,2',4',6'-tetrahydroxychalcone (also termed chalcone) into naringenin. This chain is Chalcone--flavanone isomerase 1 (CHI1), found in Medicago sativa (Alfalfa).